The following is a 332-amino-acid chain: tRNA (cytosine(38)-C(5))-methyltransferase (332 aa).

One can recognise an SAM-dependent MTase C5-type domain in the interval 3-332; that stretch reads HKILELYSGI…ISELLKILFE (330 aa). S-adenosyl-L-homocysteine contacts are provided by residues 12 to 14, 33 to 34, 55 to 56, and Ser75; these read IGG, DI, and NI. Cys78 is a catalytic residue. Residues Gln79, Ser97, and 316–317 each bind S-adenosyl-L-homocysteine; that span reads NS.

Belongs to the class I-like SAM-binding methyltransferase superfamily. C5-methyltransferase family.

It is found in the cytoplasm. The protein resides in the nucleus. The catalysed reaction is cytidine(38) in tRNA + S-adenosyl-L-methionine = 5-methylcytidine(38) in tRNA + S-adenosyl-L-homocysteine + H(+). It carries out the reaction a 2'-deoxycytidine in DNA + S-adenosyl-L-methionine = a 5-methyl-2'-deoxycytidine in DNA + S-adenosyl-L-homocysteine + H(+). Its function is as follows. Specifically methylates cytosine 38 in the anticodon loop of tRNA(Asp). Also has DNA (cytosine-5)-methyltransferase activity. Shows affinity for both tRNA(Asp) and DNA substrates. This chain is tRNA (cytosine(38)-C(5))-methyltransferase, found in Spodoptera frugiperda (Fall armyworm).